Consider the following 78-residue polypeptide: Alpha-amylase inhibitor Haim-1 (78 aa).

Cystine bridges form between cysteine 11-cysteine 27 and cysteine 45-cysteine 72.

Its function is as follows. Inhibits mammalian alpha-amylases specifically but has no action on plant and microbial alpha-amylases. The polypeptide is Alpha-amylase inhibitor Haim-1 (Streptomyces griseosporeus).